The sequence spans 335 residues: MVREGEERIGNRVSLGVIGVSYRETTLQQREQVLHILQQAQGSFRPEVFQEERDYVLLATCHRVELYSVAPAELFDSLAQEIELLGVSPYFYRNQDCFAHLFCVAGGLDSLVLGETEIQGQVKRAYLQAAREQKLSFALHFLFQKALKEGKVFRAKGGAPYAEITIPILVDQELRRRQIDKKASLLFIGYSEINRSVAYHLQRQGFSCITFCSRQQLPTLSMRQVVREELCFQDPYRVVFLGSSELQYALPHSLWESIWDIPDRIVFDFAVPRALPSHTVFPHRYVDMDQISDWLREHRKEVNSAHLHSLREVAYRYWNSLNQRLERRDCVGANA.

Substrate-binding positions include 60–63 (TCHR), Ser110, 115–117 (ETE), and Gln121. Catalysis depends on Cys61, which acts as the Nucleophile. 189-194 (GYSEIN) contacts NADP(+).

Belongs to the glutamyl-tRNA reductase family. As to quaternary structure, homodimer.

The catalysed reaction is (S)-4-amino-5-oxopentanoate + tRNA(Glu) + NADP(+) = L-glutamyl-tRNA(Glu) + NADPH + H(+). Its pathway is porphyrin-containing compound metabolism; protoporphyrin-IX biosynthesis; 5-aminolevulinate from L-glutamyl-tRNA(Glu): step 1/2. Catalyzes the NADPH-dependent reduction of glutamyl-tRNA(Glu) to glutamate 1-semialdehyde (GSA). The chain is Glutamyl-tRNA reductase from Chlamydia trachomatis serovar D (strain ATCC VR-885 / DSM 19411 / UW-3/Cx).